The primary structure comprises 300 residues: Ferredoxin/F(420)H(2)-dependent CoB-CoM heterodisulfide reductase subunit B (300 aa).

Belongs to the HdrB family. As to quaternary structure, the ferredoxin/F(420)H(2)-dependent CoB-CoM heterodisulfide reductase is composed of three subunits; HdrA2, HdrB2 and HdrC2. [4Fe-4S] cluster is required as a cofactor.

It is found in the cytoplasm. The catalysed reaction is coenzyme B + coenzyme M + 2 oxidized [2Fe-2S]-[ferredoxin] = coenzyme M-coenzyme B heterodisulfide + 2 reduced [2Fe-2S]-[ferredoxin] + 2 H(+). It catalyses the reaction coenzyme B + 2 oxidized coenzyme F420-(gamma-L-Glu)(n) + coenzyme M + 2 reduced [2Fe-2S]-[ferredoxin] + 4 H(+) = coenzyme M-coenzyme B heterodisulfide + 2 reduced coenzyme F420-(gamma-L-Glu)(n) + 2 oxidized [2Fe-2S]-[ferredoxin]. It functions in the pathway cofactor metabolism; coenzyme M-coenzyme B heterodisulfide reduction; coenzyme B and coenzyme M from coenzyme M-coenzyme B heterodisulfide: step 1/1. Its function is as follows. Part of a complex that catalyzes the reversible reduction of CoM-S-S-CoB to the thiol-coenzymes H-S-CoM (coenzyme M) and H-S-CoB (coenzyme B). Catalyzes the transfer of electrons from ferredoxin to CoM-S-S-CoB during methanogenesis from acetate. Electrons transfer from ferredoxin to CoM-S-S-CoB via HdrA2, HdrC2 and HdrB2. In addition, the complex can use electron bifurcation to direct electron pairs from reduced coenzyme F420 towards the reduction of both ferredoxin and CoB-CoM heterodisulfide. This activity may take place during Fe(III)-dependent anaerobic methane oxidation. This chain is Ferredoxin/F(420)H(2)-dependent CoB-CoM heterodisulfide reductase subunit B, found in Methanosarcina acetivorans (strain ATCC 35395 / DSM 2834 / JCM 12185 / C2A).